The sequence spans 702 residues: Cadmium, zinc and cobalt-transporting ATPase (702 aa).

The Cytoplasmic portion of the chain corresponds to M1–Y86. Positions V4–T72 constitute an HMA domain. The Cd(2+) site is built by C15 and C18. Co(2+) is bound by residues C15 and C18. Positions 15 and 18 each coordinate Zn(2+). The chain crosses the membrane as a helical span at residues R87–A107. Residues Y108–E116 are Extracellular-facing. Residues F117–V136 traverse the membrane as a helical segment. Residues K137–Q143 are Cytoplasmic-facing. Residues V144–Q163 traverse the membrane as a helical segment. The Extracellular portion of the chain corresponds to Y164 to E166. Residues G167 to S186 traverse the membrane as a helical segment. The Cytoplasmic segment spans residues R187–P320. A helical transmembrane segment spans residues A321–G339. Over A340 to W345 the chain is Extracellular. Residues V346 to V363 form a helical membrane-spanning segment. At S364 to R648 the chain is on the cytoplasmic side. The active-site 4-aspartylphosphate intermediate is the D401. Positions 595 and 599 each coordinate Mg(2+). Residues I649 to F670 form a helical membrane-spanning segment. Topologically, residues G671–A678 are extracellular. Residues V679–M694 form a helical membrane-spanning segment. Residues R695–K702 are Cytoplasmic-facing.

This sequence belongs to the cation transport ATPase (P-type) (TC 3.A.3) family. Type IB subfamily.

Its subcellular location is the cell membrane. It carries out the reaction Zn(2+)(in) + ATP + H2O = Zn(2+)(out) + ADP + phosphate + H(+). It catalyses the reaction Cd(2+)(in) + ATP + H2O = Cd(2+)(out) + ADP + phosphate + H(+). Couples the hydrolysis of ATP with the transport of cadmium, zinc and cobalt out of the cell. Does not seem to transport copper. The sequence is that of Cadmium, zinc and cobalt-transporting ATPase (cadA) from Bacillus subtilis (strain 168).